The sequence spans 1461 residues: Regulation of nuclear pre-mRNA domain-containing protein 2 (1461 aa).

Ala-2 carries the post-translational modification N-acetylalanine. At Ser-16 the chain carries Phosphoserine. A CID domain is found at 19–149 (SAGALESSLD…ALREALSTTF (131 aa)). 2 disordered regions span residues 311–438 (STLP…TSLS) and 469–504 (NTGVSPASRPSPGTPTSPSNLTSGLKTPAPATTTSH). The segment covering 352–368 (ESEKSATPEPVTDNRDV) has biased composition (basic and acidic residues). A Phosphoserine modification is found at Ser-356. Thr-358 carries the phosphothreonine modification. Over residues 369 to 378 (EDMELSDVED) the composition is skewed to acidic residues. Ser-374 bears the Phosphoserine mark. Residues 379 to 394 (DGSKIIVEDRKEKPAE) show a composition bias toward basic and acidic residues. The segment covering 397–416 (AVSTSVPTKPTENISKASSC) has biased composition (polar residues). 2 stretches are compositionally biased toward low complexity: residues 417–426 (TPVPVTMTAT) and 473–491 (SPASRPSPGTPTSPSNLTS). 3 positions are modified to phosphoserine: Ser-473, Ser-476, and Ser-479. At Thr-482 the chain carries Phosphothreonine. Residue Ser-485 is modified to Phosphoserine. A Phosphothreonine modification is found at Thr-517. Residues 547-623 (TGNPVPASEA…SPGLPSTTFK (77 aa)) are disordered. Positions 553–566 (ASEAASQSTSASPA) are enriched in low complexity. Ser-564 carries the post-translational modification Phosphoserine. A compositionally biased stretch (polar residues) spans 567 to 583 (NTTVSTIKGRNLPSSAQ). Ser-593 bears the Phosphoserine mark. The span at 593–614 (SPNSSTSEVSSTSASKASIGQS) shows a compositional bias: low complexity. Thr-598 bears the Phosphothreonine mark. Residues Ser-614, Ser-663, Ser-665, and Ser-716 each carry the phosphoserine modification. Disordered stretches follow at residues 696–849 (GSSA…MMNL), 900–997 (SENC…EKVL), 1016–1102 (ASRK…SGEP), 1132–1312 (STSG…APPL), and 1340–1461 (FGVL…PPRY). Position 723 is a phosphothreonine (Thr-723). Ser-730 bears the Phosphoserine mark. Thr-732 bears the Phosphothreonine mark. Residues 742 to 752 (PTSSSVDTMSL) are compositionally biased toward polar residues. Phosphoserine is present on residues Ser-758 and Ser-762. Low complexity predominate over residues 758 to 768 (SPGSSTPSSTR). Thr-763 is modified (phosphothreonine). 8 positions are modified to phosphoserine: Ser-769, Ser-817, Ser-826, Ser-900, Ser-909, Ser-928, Ser-965, and Ser-976. Residues 927–954 (RSPSPSKNDSFFTPDSNHNSLSQSTTGH) show a composition bias toward polar residues. Residues 1031-1055 (SKGTPSDGVSLSNLTQPSLTATDQQ) show a composition bias toward polar residues. Phosphoserine is present on residues Ser-1068 and Ser-1099. Residues 1141–1150 (GPSSASELAS) are compositionally biased toward low complexity. Over residues 1151-1160 (LGGGGSGGLT) the composition is skewed to gly residues. Residues 1174-1189 (FQESVGSFRSNSFNST) are compositionally biased toward polar residues. Composition is skewed to pro residues over residues 1267–1277 (FPTPPPPPPPG) and 1290–1299 (STPPPPPPPV). Position 1366 is an asymmetric dimethylarginine (Arg-1366). Gly residues predominate over residues 1382–1391 (PHGGGGGGGS). Residues 1417–1434 (PRPDFRPREPFLSRDPFH) show a composition bias toward basic and acidic residues. Asymmetric dimethylarginine occurs at positions 1424 and 1430.

Associates with the RNA polymerase II complex.

This Homo sapiens (Human) protein is Regulation of nuclear pre-mRNA domain-containing protein 2 (RPRD2).